Reading from the N-terminus, the 388-residue chain is Interferon alpha/beta receptor 1b (388 aa).

Fibronectin type-III domains lie at 5-102 (LPQP…FCPD) and 109-211 (PPSR…TEGD). The helical transmembrane segment at 217–237 (IFLYFLVSMMVCFLLVLLSSY) threads the bilayer. A disordered region spans residues 308–357 (TAPPSELEQDSGRHIRQDSGDSGIYSTEGGSAQQGRSGGEPIRRDQEVDS). Residues 317–326 (DSGRHIRQDS) show a composition bias toward basic and acidic residues. Over residues 331-342 (IYSTEGGSAQQG) the composition is skewed to polar residues.

Belongs to the type II cytokine receptor family. In terms of assembly, heterodimer with IFNAR2; forming the receptor for type I interferon.

It localises to the cell membrane. The protein localises to the cytoplasm. The protein resides in the perinuclear region. Together with IFNAR2, forms the heterodimeric receptor for type I interferons (including interferons alpha, beta, epsilon, omega and kappa). Type I interferon binding activates the JAK-STAT signaling cascade, resulting in transcriptional activation or repression of interferon-regulated genes that encode the effectors of the interferon response. Mechanistically, type I interferon-binding brings the IFNAR1 and IFNAR2 subunits into close proximity with one another, driving their associated Janus kinases (JAKs) (TYK2 bound to IFNAR1 and JAK1 bound to IFNAR2) to cross-phosphorylate one another. The activated kinases phosphorylate specific tyrosine residues on the intracellular domains of IFNAR1 and IFNAR2, forming docking sites for the STAT transcription factors. STAT proteins are then phosphorylated by the JAKs, promoting their translocation into the nucleus to regulate expression of interferon-regulated genes. The protein is Interferon alpha/beta receptor 1b of Oncorhynchus mykiss (Rainbow trout).